We begin with the raw amino-acid sequence, 363 residues long: Histidinol-phosphate aminotransferase (363 aa).

An N6-(pyridoxal phosphate)lysine modification is found at Lys220.

Belongs to the class-II pyridoxal-phosphate-dependent aminotransferase family. Histidinol-phosphate aminotransferase subfamily. Homodimer. Requires pyridoxal 5'-phosphate as cofactor.

It carries out the reaction L-histidinol phosphate + 2-oxoglutarate = 3-(imidazol-4-yl)-2-oxopropyl phosphate + L-glutamate. The protein operates within amino-acid biosynthesis; L-histidine biosynthesis; L-histidine from 5-phospho-alpha-D-ribose 1-diphosphate: step 7/9. The protein is Histidinol-phosphate aminotransferase of Chlorobium chlorochromatii (strain CaD3).